The following is an 809-amino-acid chain: Glycerol-3-phosphate acyltransferase (809 aa).

The short motif at 306 to 311 (HRSHMD) is the HXXXXD motif element.

This sequence belongs to the GPAT/DAPAT family.

The protein resides in the cell inner membrane. It carries out the reaction sn-glycerol 3-phosphate + an acyl-CoA = a 1-acyl-sn-glycero-3-phosphate + CoA. Its pathway is phospholipid metabolism; CDP-diacylglycerol biosynthesis; CDP-diacylglycerol from sn-glycerol 3-phosphate: step 1/3. The chain is Glycerol-3-phosphate acyltransferase from Vibrio vulnificus (strain CMCP6).